Reading from the N-terminus, the 354-residue chain is Protein-arginine kinase (354 aa).

Residues 24–254 (IVLSSRIRLA…QQIIQQEKMA (231 aa)) enclose the Phosphagen kinase C-terminal domain. Residues 27 to 31 (SSRIR), His92, Arg125, 176 to 180 (RASVM), and 207 to 212 (RGIYGE) contribute to the ATP site. The RDXXRA motif of the pArg binding pocket involved in allosteric regulation signature appears at 337-342 (RDYRRA).

It belongs to the ATP:guanido phosphotransferase family.

The catalysed reaction is L-arginyl-[protein] + ATP = N(omega)-phospho-L-arginyl-[protein] + ADP + H(+). With respect to regulation, appears to be allosterically activated by the binding of pArg-containing polypeptides to the pArg-binding pocket localized in the C-terminal domain of McsB. In terms of biological role, catalyzes the specific phosphorylation of arginine residues in a large number of proteins. Is part of the bacterial stress response system. Protein arginine phosphorylation has a physiologically important role and is involved in the regulation of many critical cellular processes, such as protein homeostasis, motility, competence, and stringent and stress responses, by regulating gene expression and protein activity. The chain is Protein-arginine kinase from Bacillus cereus (strain AH187).